The following is a 181-amino-acid chain: ADP-ribosylation factor 1 (181 aa).

Glycine 2 carries N-myristoyl glycine lipidation. Residues 24 to 31, 67 to 71, and 126 to 129 contribute to the GTP site; these read GLDAAGKT, DVGGQ, and NKQD.

The protein belongs to the small GTPase superfamily. Arf family. In terms of tissue distribution, seedling shoots.

The protein resides in the golgi apparatus. The enzyme catalyses GTP + H2O = GDP + phosphate + H(+). Its function is as follows. GTP-binding protein involved in protein trafficking; may modulate vesicle budding and uncoating within the Golgi apparatus. The sequence is that of ADP-ribosylation factor 1 from Oryza sativa subsp. japonica (Rice).